The primary structure comprises 428 residues: Proteinase-activated receptor 1 (428 aa).

The first 21 residues, 1–21, serve as a signal peptide directing secretion; that stretch reads MGPQRLLLVAAGLSLCGPLLS. The propeptide at 22–41 is removed for receptor activation; the sequence is SRVPVRQPESEMTDATVNPR. At 42–105 the chain is on the extracellular side; that stretch reads SFFLRNPGEN…SGYLTSPWLR (64 aa). N65 and N78 each carry an N-linked (GlcNAc...) asparagine glycan. The helical transmembrane segment at 106–131 threads the bilayer; it reads LFIPSVYTFVFVVSLPLNILAIAVFV. Topologically, residues 132-140 are cytoplasmic; sequence LKMKVKKPA. The chain crosses the membrane as a helical span at residues 141–160; sequence VVYMLHLAMADVLFVSVLPL. The Extracellular segment spans residues 161–179; the sequence is KISYYFSGSDWQFGSGMCR. The cysteines at positions 178 and 257 are disulfide-linked. Residues 180 to 201 form a helical membrane-spanning segment; that stretch reads FATAAFYCNMYASIMLMTVISI. At 202-221 the chain is on the cytoplasmic side; that stretch reads DRFLAVVYPIQSLSWRTLGR. A helical transmembrane segment spans residues 222 to 242; that stretch reads ANFTCLVIWVMAIMGVVPLLL. Over 243-271 the chain is Extracellular; the sequence is KEQTTRVPGLNITTCHDVLNETLLQGFYS. N253 and N262 each carry an N-linked (GlcNAc...) asparagine glycan. The helical transmembrane segment at 272–291 threads the bilayer; it reads YYFSAFSAVFFLVPLIISTI. Over 292–314 the chain is Cytoplasmic; it reads CYMSIIRCLSSSSVANRSKKSRA. A helical transmembrane segment spans residues 315-337; sequence LFLSAAVFCVFIVCFGPTNVLLI. At 338–352 the chain is on the extracellular side; sequence MHYLLLSDSPATEKA. Residues 353–377 form a helical membrane-spanning segment; that stretch reads YFAYLLCVCVSSVSCCIDPLIYYYA. Residues 378–428 are Cytoplasmic-facing; that stretch reads SSECQRHLYGILCCKESSDPNSYNSTGQLMPSKMDTCSSHLNNSIYKKLLA. Residue S421 is modified to Phosphoserine.

Belongs to the G-protein coupled receptor 1 family. In terms of processing, proteolytic cleavage by thrombin generates a new N-terminus that functions as a tethered ligand. Also proteolytically cleaved by cathepsin CTSG. Phosphorylated in the C-terminal tail; probably mediating desensitization prior to the uncoupling and internalization of the receptor.

Its subcellular location is the cell membrane. In terms of biological role, high affinity receptor that binds the activated thrombin, leading to calcium release from intracellular stores. The thrombin-activated receptor signaling pathway is mediated through PTX-insensitive G proteins, activation of phospholipase C resulting in the production of 1D-myo-inositol 1,4,5-trisphosphate (InsP3) which binds to InsP3 receptors causing calcium release from the stores. In astrocytes, the calcium released into the cytosol allows the Ca(2+)-dependent release of L-glutamate into the synaptic cleft through BEST1, that targets the neuronal postsynaptic GRIN2A/NMDAR receptor resulting in the synaptic plasticity regulation. May play a role in platelets activation and in vascular development. Mediates up-regulation of pro-inflammatory cytokines, such as MCP-1/CCL2 and IL6, triggered by coagulation factor Xa (F10) in cardiac fibroblasts and umbilical vein endothelial cells. The polypeptide is Proteinase-activated receptor 1 (Cricetulus longicaudatus (Long-tailed dwarf hamster)).